The sequence spans 280 residues: Late embryogenesis abundant protein M17 (280 aa).

The signal sequence occupies residues 1-22 (MGNLKSLVLLALLFSFSVAVFA). N-linked (GlcNAc...) asparagine glycosylation is present at asparagine 23. 2 repeat units span residues 76–97 (GGCRWGCCGGWWRGRCRYCCRS) and 131–152 (GGCRWGCCGGWWRGRCRYCCRS). The segment at 76–262 (GGCRWGCCGG…RGRCRYCCRS (187 aa)) is 4 X 22 AA repeats, Cys-rich. Positions 163-184 (VEPNDVEPQQGGRGGGGGGGGG) are disordered. Positions 173–184 (GGRGGGGGGGGG) are enriched in gly residues. The stretch at 186-207 (GGCRWGCCGGWWRGRCRYCCRS) is repeat 3. Residues 218–239 (VEPNDVEPQQGGRGGGGGGGGG) are disordered. A compositionally biased stretch (gly residues) spans 228-239 (GGRGGGGGGGGG). The stretch at 241–262 (GGCRWGCCGGWWRGRCRYCCRS) is repeat 4.

May be involved in the acquisition of desiccation tolerance during late phase of embryogenesis. The protein is Late embryogenesis abundant protein M17 of Arabidopsis thaliana (Mouse-ear cress).